A 229-amino-acid chain; its full sequence is Protein TraJ (229 aa).

The protein resides in the cytoplasm. This protein is essential for positively regulating the expression of transfer genes that are involved in the conjugal transfer of DNA between bacterial cells. This Escherichia coli (strain K12) protein is Protein TraJ (traJ).